A 190-amino-acid polypeptide reads, in one-letter code: NADH-quinone oxidoreductase subunit C (190 aa).

This sequence belongs to the complex I 30 kDa subunit family. As to quaternary structure, NDH-1 is composed of 14 different subunits. Subunits NuoB, C, D, E, F, and G constitute the peripheral sector of the complex.

It localises to the cell membrane. The catalysed reaction is a quinone + NADH + 5 H(+)(in) = a quinol + NAD(+) + 4 H(+)(out). NDH-1 shuttles electrons from NADH, via FMN and iron-sulfur (Fe-S) centers, to quinones in the respiratory chain. The immediate electron acceptor for the enzyme in this species is believed to be ubiquinone. Couples the redox reaction to proton translocation (for every two electrons transferred, four hydrogen ions are translocated across the cytoplasmic membrane), and thus conserves the redox energy in a proton gradient. In Wolbachia sp. subsp. Brugia malayi (strain TRS), this protein is NADH-quinone oxidoreductase subunit C.